Reading from the N-terminus, the 142-residue chain is Large ribosomal subunit protein uL16 (142 aa).

The protein belongs to the universal ribosomal protein uL16 family. In terms of assembly, part of the 50S ribosomal subunit.

In terms of biological role, binds 23S rRNA and is also seen to make contacts with the A and possibly P site tRNAs. The polypeptide is Large ribosomal subunit protein uL16 (Phenylobacterium zucineum (strain HLK1)).